The following is a 51-amino-acid chain: Insulin (51 aa).

Disulfide bonds link cysteine 8–cysteine 37, cysteine 20–cysteine 50, and cysteine 36–cysteine 41.

The protein belongs to the insulin family. In terms of assembly, heterodimer of a B chain and an A chain linked by two disulfide bonds.

Its subcellular location is the secreted. Insulin decreases blood glucose concentration. It increases cell permeability to monosaccharides, amino acids and fatty acids. It accelerates glycolysis, the pentose phosphate cycle, and glycogen synthesis in liver. This chain is Insulin (ins), found in Platichthys flesus (European flounder).